The sequence spans 105 residues: Oxytocin-neurophysin 1 (105 aa).

Residues Cys-1 and Cys-6 are joined by a disulfide bond. Gly-9 carries the post-translational modification Glycine amide. Cystine bridges form between Cys-22/Cys-66, Cys-25/Cys-39, Cys-33/Cys-56, Cys-40/Cys-46, Cys-73/Cys-85, Cys-79/Cys-97, and Cys-86/Cys-91.

Belongs to the vasopressin/oxytocin family. As to quaternary structure, interacts with oxytocin receptor (Ki=1.5 nM). Interacts with vasopressin V1aR/AVPR1A (Ki=37 nM), V1bR/AVPR1B (Ki=222 nM), and V2R/AVPR2 receptors (Ki=823 nM).

The protein localises to the secreted. Its function is as follows. Neurophysin 1 specifically binds oxytocin. Functionally, oxytocin causes contraction of the smooth muscle of the uterus and of the mammary gland. Acts by binding to oxytocin receptor (OXTR). This chain is Oxytocin-neurophysin 1 (OXT), found in Equus caballus (Horse).